Here is a 530-residue protein sequence, read N- to C-terminus: UDP-N-acetylmuramoyl-L-alanyl-D-glutamate--2,6-diaminopimelate ligase (530 aa).

Residue L52 participates in UDP-N-acetyl-alpha-D-muramoyl-L-alanyl-D-glutamate binding. 139 to 145 serves as a coordination point for ATP; the sequence is GTSGKTT. UDP-N-acetyl-alpha-D-muramoyl-L-alanyl-D-glutamate contacts are provided by residues 181 to 182, S208, and R216; that span reads TT. K248 carries the post-translational modification N6-carboxylysine. Meso-2,6-diaminopimelate-binding positions include R410, 434–437, G488, and E492; that span reads DNPR. The Meso-diaminopimelate recognition motif motif lies at 434–437; that stretch reads DNPR.

It belongs to the MurCDEF family. MurE subfamily. The cofactor is Mg(2+). Post-translationally, carboxylation is probably crucial for Mg(2+) binding and, consequently, for the gamma-phosphate positioning of ATP.

Its subcellular location is the cytoplasm. The enzyme catalyses UDP-N-acetyl-alpha-D-muramoyl-L-alanyl-D-glutamate + meso-2,6-diaminopimelate + ATP = UDP-N-acetyl-alpha-D-muramoyl-L-alanyl-gamma-D-glutamyl-meso-2,6-diaminopimelate + ADP + phosphate + H(+). It functions in the pathway cell wall biogenesis; peptidoglycan biosynthesis. In terms of biological role, catalyzes the addition of meso-diaminopimelic acid to the nucleotide precursor UDP-N-acetylmuramoyl-L-alanyl-D-glutamate (UMAG) in the biosynthesis of bacterial cell-wall peptidoglycan. This chain is UDP-N-acetylmuramoyl-L-alanyl-D-glutamate--2,6-diaminopimelate ligase, found in Mycobacterium leprae (strain TN).